A 1072-amino-acid chain; its full sequence is Teashirt homolog 3 (1072 aa).

Disordered stretches follow at residues Ala44 to Ser71, Pro130 to Gly153, and His228 to Pro247. Positions Ser57–Ser71 are enriched in basic and acidic residues. 2 C2H2-type zinc fingers span residues Phe204–His228 and Leu265–His289. The span at His228–Asp237 shows a compositional bias: basic and acidic residues. The segment at Ser315–Ser336 is disordered. A C2H2-type 3; atypical zinc finger spans residues Leu376–His400. Over residues Ala469–Ala481 the composition is skewed to basic and acidic residues. Disordered regions lie at residues Ala469–Asp489, Asn569–Lys594, Glu616–Gly690, Thr784–Thr815, and Thr846–Asn888. 2 stretches are compositionally biased toward polar residues: residues Glu571–Pro593 and Ser649–Ser660. Position 672 is a phosphoserine (Ser672). Composition is skewed to low complexity over residues Gly791–Thr815 and Glu847–Ser860. Residues Arg882 to Gly952 constitute a DNA-binding region (homeobox; atypical). C2H2-type zinc fingers lie at residues Phe967–His989 and Tyr1032–His1055.

This sequence belongs to the teashirt C2H2-type zinc-finger protein family. Interacts (via N-terminus) with HDAC1 and HDAC2; the interaction is direct. Found in a trimeric complex with APBB1 and HDAC1; the interaction between HDAC1 and APBB1 is mediated by TSHZ3. Interacts (via homeobox domain) with APBB1 (via PID domain 1). As to expression, expressed in cortical neurons.

The protein resides in the nucleus. It localises to the cell projection. Its subcellular location is the growth cone. Its function is as follows. Transcriptional regulator involved in developmental processes. Functions in association with APBB1, SET and HDAC factors as a transcriptional repressor, that inhibits the expression of CASP4. TSHZ3-mediated transcription repression involves the recruitment of histone deacetylases HDAC1 and HDAC2. Associates with chromatin in a region surrounding the CASP4 transcriptional start site(s). Regulates the development of neurons involved in both respiratory rhythm and airflow control. Promotes maintenance of nucleus ambiguus (nA) motoneurons, which govern upper airway function, and establishes a respiratory rhythm generator (RRG) activity compatible with survival at birth. Involved in the differentiation of the proximal uretic smooth muscle cells during developmental processes. Involved in the up-regulation of myocardin, that directs the expression of smooth muscle cells in the proximal ureter. Involved in the modulation of glutamatergic synaptic transmission and long-term synaptic potentiation. The chain is Teashirt homolog 3 (Tshz3) from Rattus norvegicus (Rat).